Here is a 278-residue protein sequence, read N- to C-terminus: HTH-type transcriptional activator RhaS (278 aa).

In terms of domain architecture, HTH araC/xylS-type spans 174–272 (NLLLAWLEDH…NWSPRDIRQG (99 aa)). 2 consecutive DNA-binding regions (H-T-H motif) follow at residues 191 to 212 (DAVA…KQQT) and 239 to 262 (VTDI…RREF).

In terms of assembly, binds DNA as a dimer.

The protein resides in the cytoplasm. Activates expression of the rhaBAD and rhaT operons. The polypeptide is HTH-type transcriptional activator RhaS (Shigella dysenteriae serotype 1 (strain Sd197)).